The sequence spans 156 residues: Cytochrome c-type biogenesis protein CcmE 1 (156 aa).

Residues Met1–Arg8 lie on the Cytoplasmic side of the membrane. A helical; Signal-anchor for type II membrane protein transmembrane segment spans residues Leu9–Ala29. At Leu30–Arg156 the chain is on the periplasmic side. His123 and Tyr127 together coordinate heme.

The protein belongs to the CcmE/CycJ family.

It is found in the cell inner membrane. Heme chaperone required for the biogenesis of c-type cytochromes. Transiently binds heme delivered by CcmC and transfers the heme to apo-cytochromes in a process facilitated by CcmF and CcmH. The polypeptide is Cytochrome c-type biogenesis protein CcmE 1 (Xanthomonas campestris pv. campestris (strain 8004)).